Reading from the N-terminus, the 445-residue chain is Exodeoxyribonuclease 7 large subunit (445 aa).

Belongs to the XseA family. Heterooligomer composed of large and small subunits.

It localises to the cytoplasm. It carries out the reaction Exonucleolytic cleavage in either 5'- to 3'- or 3'- to 5'-direction to yield nucleoside 5'-phosphates.. Bidirectionally degrades single-stranded DNA into large acid-insoluble oligonucleotides, which are then degraded further into small acid-soluble oligonucleotides. The protein is Exodeoxyribonuclease 7 large subunit of Xanthomonas euvesicatoria pv. vesicatoria (strain 85-10) (Xanthomonas campestris pv. vesicatoria).